The sequence spans 339 residues: RNA 3'-terminal phosphate cyclase (339 aa).

Residues Gln-103 and 283–287 (HLADQ) contribute to the ATP site. The Tele-AMP-histidine intermediate role is filled by His-308.

The protein belongs to the RNA 3'-terminal cyclase family. Type 1 subfamily.

It is found in the cytoplasm. It carries out the reaction a 3'-end 3'-phospho-ribonucleotide-RNA + ATP = a 3'-end 2',3'-cyclophospho-ribonucleotide-RNA + AMP + diphosphate. Functionally, catalyzes the conversion of 3'-phosphate to a 2',3'-cyclic phosphodiester at the end of RNA. The mechanism of action of the enzyme occurs in 3 steps: (A) adenylation of the enzyme by ATP; (B) transfer of adenylate to an RNA-N3'P to produce RNA-N3'PP5'A; (C) and attack of the adjacent 2'-hydroxyl on the 3'-phosphorus in the diester linkage to produce the cyclic end product. The biological role of this enzyme is unknown but it is likely to function in some aspects of cellular RNA processing. This chain is RNA 3'-terminal phosphate cyclase, found in Salmonella typhimurium (strain LT2 / SGSC1412 / ATCC 700720).